A 403-amino-acid polypeptide reads, in one-letter code: Putative F-box/LRR-repeat protein At5g38386 (403 aa).

Positions 1–47 (MDHLSNLPDELLCHIMSFLTTKEAALISVLSKRWRNLIAFVPNLDIF) constitute an F-box domain. 6 LRR repeats span residues 64–91 (IRQLFMDFVDRVLALQGNSPLKKFSLCC), 93–119 (GGSYSDRVDCWIQNVMVRGVSELDLSM), 131–156 (VFENKKLNFEIFLRALPALEELVMNH), 175–203 (LKTLTIKCIVCLHTKSFDTPSLAYLSYSD), 243–274 (YLYFSRDTLEVLSLCCESMPVFKNLKSLSIKS), and 275–300 (VESRGWQAMPVLLRNCPHLETLVLEA).

The sequence is that of Putative F-box/LRR-repeat protein At5g38386 from Arabidopsis thaliana (Mouse-ear cress).